Consider the following 574-residue polypeptide: Protein misato (574 aa).

The protein belongs to the misato family.

It localises to the mitochondrion. The protein is Protein misato (mst) of Drosophila melanogaster (Fruit fly).